A 134-amino-acid polypeptide reads, in one-letter code: Protein Turandot E (134 aa).

An N-terminal signal peptide occupies residues 1 to 38 (MSYNRTLHSTTSILKMNSALQISCLLLVLGCLLGSGHG).

It belongs to the Turandot family.

The protein localises to the secreted. Its function is as follows. A humoral factor that may play a role in stress tolerance. This Drosophila yakuba (Fruit fly) protein is Protein Turandot E.